A 266-amino-acid chain; its full sequence is HLA class II histocompatibility antigen, DRB1 beta chain (266 aa).

An N-terminal signal peptide occupies residues 1–29; it reads MVCLKLPGGSCMTALTVTLMVLSSPLALS. Residues 30–124 form a beta-1 region; the sequence is GDTRPRFLWQ…VESFTVQRRV (95 aa). The Extracellular segment spans residues 30-227; that stretch reads GDTRPRFLWQ…RARSESAQSK (198 aa). Cysteine 44 and cysteine 108 are disulfide-bonded. Asparagine 48 carries N-linked (GlcNAc...) asparagine glycosylation. Positions 86, 90, 110, 111, and 122 each coordinate a peptide antigen. Residues 125–227 are beta-2; that stretch reads QPKVTVYPSK…RARSESAQSK (103 aa). One can recognise an Ig-like C1-type domain in the interval 126 to 214; sequence PKVTVYPSKT…EHPSVTSPLT (89 aa). A disulfide bridge connects residues cysteine 146 and cysteine 202. The helical transmembrane segment at 228–248 threads the bilayer; that stretch reads MLSGVGGFVLGLLFLGAGLFI. Topologically, residues 249 to 266 are cytoplasmic; the sequence is YFRNQKGHSGLQPTGFLS. Lysine 254 participates in a covalent cross-link: Glycyl lysine isopeptide (Lys-Gly) (interchain with G-Cter in ubiquitin).

Heterotrimer that consists of an alpha chain HLA-DRA, a beta chain HLA-DRB1 and a peptide (peptide-MHCII). Newly synthesized alpha and beta chains forms a heterodimer (MHCII) that associates with the CD74/invariant chain (Ii) in the endoplasmic reticulum (ER). Ii is a trimer composed of three subunits and each subunit interacts with one MHCII dimer, blocking the peptide-binding cleft. As a result, MHCII molecules cannot bind peptides present in the ER. The complex of MHCII and CD74/Ii is transported in vesicles from ER to Golgi to lysosomes, where it encounters antigenic peptides generated via proteolysis of endocytosed antigens. MHCII dimers are dissociated from CD74/Ii by the combined action of proteolysis and HLA-DM. Lysosomal enzymes such as cathepsin, degrade CD74/Ii leaving a 24 amino acid remnant called class II-associated Ii or CLIP. Interacts (via the peptide binding cleft) with CLIP; this interaction inhibits antigen peptide binding before entry in the endosomal compartment. The displacement of CLIP and replacement by a high affinity peptide in lysosomes is performed by HLA-DM heterodimer. HLA-DM catalyzes CLIP dissociation from MHCII, stabilizes empty MHCII and mediates the selection of high affinity peptides. Interacts with HLA-DM heterodimer; this interaction is direct. Interacts with TCR (via CDR3). Interacts (via beta-2 domain) with CD4 coreceptor (via Ig-like V-type domain); this interaction is of exceptionally low affinity yet necessary for optimal recognition of antigenic peptides. In terms of assembly, (Microbial infection) Interacts with Staphylococcus aureus enterotoxin A/entA, enterotoxin B/entB, enterotoxin C1/entC1, enterotoxin D/entD and enterotoxin H/entH. Enterotoxins bind outside the peptide-binding cleft of MHCII: enterotoxin H/entH interacts via the beta-1 domain of MHCII and in a zinc-dependent way, whereas enterotoxin B/entB interacts primarily via the alpha-1 domain. As to quaternary structure, (Microbial infection) Interacts with Epstein-Barr virus gp42 protein. In terms of processing, ubiquitinated by MARCHF1 and MARCHF8 at Lys-254 leading to sorting into the endosome system and down-regulation of MHCII. As to expression, expressed in professional APCs: monocyte/macrophages, dendritic cells and B cells (at protein level). Expressed in thymic epithelial cells (at protein level).

It is found in the cell membrane. It localises to the endoplasmic reticulum membrane. The protein resides in the lysosome membrane. The protein localises to the late endosome membrane. Its subcellular location is the autolysosome membrane. Functionally, a beta chain of antigen-presenting major histocompatibility complex class II (MHCII) molecule. In complex with the alpha chain HLA-DRA, displays antigenic peptides on professional antigen presenting cells (APCs) for recognition by alpha-beta T cell receptor (TCR) on HLA-DRB1-restricted CD4-positive T cells. This guides antigen-specific T-helper effector functions, both antibody-mediated immune response and macrophage activation, to ultimately eliminate the infectious agents and transformed cells. Typically presents extracellular peptide antigens of 10 to 30 amino acids that arise from proteolysis of endocytosed antigens in lysosomes. In the tumor microenvironment, presents antigenic peptides that are primarily generated in tumor-resident APCs likely via phagocytosis of apoptotic tumor cells or macropinocytosis of secreted tumor proteins. Presents peptides derived from intracellular proteins that are trapped in autolysosomes after macroautophagy, a mechanism especially relevant for T cell selection in the thymus and central immune tolerance. The selection of the immunodominant epitopes follows two processing modes: 'bind first, cut/trim later' for pathogen-derived antigenic peptides and 'cut first, bind later' for autoantigens/self-peptides. The anchor residue at position 1 of the peptide N-terminus, usually a large hydrophobic residue, is essential for high affinity interaction with MHCII molecules. In terms of biological role, allele DRB1*01:01: Displays an immunodominant epitope derived from Bacillus anthracis pagA/protective antigen, PA (KLPLYISNPNYKVNVYAVT), to both naive and PA-specific memory CD4-positive T cells. Presents immunodominant HIV-1 gag peptide (FRDYVDRFYKTLRAEQASQE) on infected dendritic cells for recognition by TRAV24-TRBV2 TCR on CD4-positive T cells and controls viral load. May present to T-helper 1 cells several HRV-16 epitopes derived from capsid proteins VP1 (PRFSLPFLSIASAYYMFYDG) and VP2 (PHQFINLRSNNSATLIVPYV), contributing to viral clearance. Displays commonly recognized peptides derived from IAV external protein HA (PKYVKQNTLKLAT and SNGNFIAPEYAYKIVK) and from internal proteins M, NP and PB1, with M-derived epitope (GLIYNRMGAVTTEV) being the most immunogenic. Presents a self-peptide derived from COL4A3 (GWISLWKGFSF) to TCR (TRAV14 biased) on CD4-positive, FOXP3-positive regulatory T cells and mediates immune tolerance to self. May present peptides derived from oncofetal trophoblast glycoprotein TPBG 5T4, known to be recognized by both T-helper 1 and regulatory T cells. Displays with low affinity a self-peptide derived from MBP (VHFFKNIVTPRTP). Its function is as follows. Allele DRB1*03:01: May present to T-helper 1 cells an HRV-16 epitope derived from capsid protein VP2 (NEKQPSDDNWLNFDGTLLGN), contributing to viral clearance. Displays self-peptides derived from retinal SAG (NRERRGIALDGKIKHE) and thyroid TG (LSSVVVDPSIRHFDV). Presents viral epitopes derived from HHV-6B gH/U48 and U85 antigens to polyfunctional CD4-positive T cells with cytotoxic activity implicated in control of HHV-6B infection. Presents several immunogenic epitopes derived from C.tetani neurotoxin tetX, playing a role in immune recognition and long-term protection. Allele DRB1*04:01: Presents an immunodominant bacterial epitope derived from M.tuberculosis esxB/culture filtrate antigen CFP-10 (EISTNIRQAGVQYSR), eliciting CD4-positive T cell effector functions such as IFNG production and cytotoxic activity. May present to T-helper 1 cells an HRV-16 epitope derived from capsid protein VP2 (NEKQPSDDNWLNFDGTLLGN), contributing to viral clearance. Presents tumor epitopes derived from melanoma-associated TYR antigen (QNILLSNAPLGPQFP and DYSYLQDSDPDSFQD), triggering CD4-positive T cell effector functions such as GMCSF production. Displays preferentially citrullinated self-peptides derived from VIM (GVYATR/citSSAVR and SAVRAR/citSSVPGVR) and ACAN (VVLLVATEGR/ CitVRVNSAYQDK). Displays self-peptides derived from COL2A1. Functionally, allele DRB1*04:02: Displays native or citrullinated self-peptides derived from VIM. In terms of biological role, allele DRB1*04:04: May present to T-helper 1 cells several HRV-16 epitopes derived from capsid proteins VP1 (HIVMQYMYVPPGAPIPTTRN) and VP2 (RGDSTITSQDVANAVVGYGV), contributing to viral clearance. Displays preferentially citrullinated self-peptides derived from VIM (SAVRAR/citSSVPGVR). Its function is as follows. Allele DRB1*04:05: May present to T-helper 1 cells an immunogenic epitope derived from tumor-associated antigen WT1 (KRYFKLSHLQMHSRKH), likely providing for effective antitumor immunity in a wide range of solid and hematological malignancies. Allele DRB1*05:01: Presents an immunodominant HIV-1 gag peptide (FRDYVDRFYKTLRAEQASQE) on infected dendritic cells for recognition by TRAV24-TRBV2 TCR on CD4-positive T cells and controls viral load. Functionally, allele DRB1*07:01: Upon EBV infection, presents latent antigen EBNA2 peptide (PRSPTVFYNIPPMPLPPSQL) to CD4-positive T cells, driving oligoclonal expansion and selection of a dominant virus-specific memory T cell subset with cytotoxic potential to directly eliminate virus-infected B cells. May present to T-helper 1 cells several HRV-16 epitopes derived from capsid proteins VP1 (PRFSLPFLSIASAYYMFYDG) and VP2 (VPYVNAVPMDSMVRHNNWSL), contributing to viral clearance. In the context of tumor immunesurveillance, may present to T-helper 1 cells an immunogenic epitope derived from tumor-associated antigen WT1 (MTEYKLVVVGAVGVGKSALTIQLI), likely providing for effective antitumor immunity in a wide range of solid and hematological malignancies. In metastatic epithelial tumors, presents to intratumoral CD4-positive T cells a KRAS neoantigen (MTEYKLVVVGAVGVGKSALTIQLI) carrying G12V hotspot driver mutation and may mediate tumor regression. In terms of biological role, allele DRB1*11:01: Displays an immunodominant HIV-1 gag peptide (FRDYVDRFYKTLRAEQASQE) on infected dendritic cells for recognition by TRAV24-TRBV2 TCR on CD4-positive T cells and controls viral load. May present to T-helper 1 cells an HRV-16 epitope derived from capsid protein VP2 (SDRIIQITRGDSTITSQDVA), contributing to viral clearance. Presents several immunogenic epitopes derived from C.tetani neurotoxin tetX, playing a role in immune recognition and longterm protection. In the context of tumor immunesurveillance, may present tumor-derived neoantigens to CD4-positive T cells and trigger anti-tumor helper functions. Its function is as follows. Allele DRB1*13:01: Presents viral epitopes derived from HHV-6B antigens to polyfunctional CD4-positive T cells implicated in control of HHV-6B infection. Allele DRB1*15:01: May present to T-helper 1 cells an HRV-16 epitope derived from capsid protein VP2 (SNNSATLIVPYVNAVPMDSM), contributing to viral clearance. Displays a self-peptide derived from MBP (ENPVVHFFKNIVTPR). May present to T-helper 1 cells an immunogenic epitope derived from tumor-associated antigen WT1 (KRYFKLSHLQMHSRKH), likely providing for effective antitumor immunity in a wide range of solid and hematological malignancies. Functionally, allele DRB1*15:02: Displays an immunodominant HIV-1 gag peptide (FRDYVDRFYKTLRAEQASQE) on infected dendritic cells for recognition by TRAV24-TRBV2 TCR on CD4-positive T cells and controls viral load. May present to T-helper 1 cells an immunogenic epitope derived from tumor-associated antigen WT1 (KRYFKLSHLQMHSRKH), likely providing for effective antitumor immunity in a wide range of solid and hematological malignancies. In terms of biological role, (Microbial infection) Acts as a receptor for Epstein-Barr virus on lymphocytes. The protein is HLA class II histocompatibility antigen, DRB1 beta chain of Homo sapiens (Human).